Consider the following 161-residue polypeptide: RNA pyrophosphohydrolase (161 aa).

A Nudix hydrolase domain is found at 12–154 (PYRIGVGMVI…KRKLYKAVIN (143 aa)). The short motif at 46–67 (GGIILGETYSKAVLREMKEEIG) is the Nudix box element.

Belongs to the Nudix hydrolase family. RppH subfamily. It depends on a divalent metal cation as a cofactor.

Functionally, accelerates the degradation of transcripts by removing pyrophosphate from the 5'-end of triphosphorylated RNA, leading to a more labile monophosphorylated state that can stimulate subsequent ribonuclease cleavage. This is RNA pyrophosphohydrolase from Orientia tsutsugamushi (strain Boryong) (Rickettsia tsutsugamushi).